The chain runs to 186 residues: Elongation factor P (186 aa).

It belongs to the elongation factor P family.

The protein resides in the cytoplasm. Its pathway is protein biosynthesis; polypeptide chain elongation. Functionally, involved in peptide bond synthesis. Stimulates efficient translation and peptide-bond synthesis on native or reconstituted 70S ribosomes in vitro. Probably functions indirectly by altering the affinity of the ribosome for aminoacyl-tRNA, thus increasing their reactivity as acceptors for peptidyl transferase. This is Elongation factor P from Ruminiclostridium cellulolyticum (strain ATCC 35319 / DSM 5812 / JCM 6584 / H10) (Clostridium cellulolyticum).